Here is a 163-residue protein sequence, read N- to C-terminus: SsrA-binding protein (163 aa).

The protein belongs to the SmpB family.

It is found in the cytoplasm. Functionally, required for rescue of stalled ribosomes mediated by trans-translation. Binds to transfer-messenger RNA (tmRNA), required for stable association of tmRNA with ribosomes. tmRNA and SmpB together mimic tRNA shape, replacing the anticodon stem-loop with SmpB. tmRNA is encoded by the ssrA gene; the 2 termini fold to resemble tRNA(Ala) and it encodes a 'tag peptide', a short internal open reading frame. During trans-translation Ala-aminoacylated tmRNA acts like a tRNA, entering the A-site of stalled ribosomes, displacing the stalled mRNA. The ribosome then switches to translate the ORF on the tmRNA; the nascent peptide is terminated with the 'tag peptide' encoded by the tmRNA and targeted for degradation. The ribosome is freed to recommence translation, which seems to be the essential function of trans-translation. The chain is SsrA-binding protein from Corynebacterium diphtheriae (strain ATCC 700971 / NCTC 13129 / Biotype gravis).